We begin with the raw amino-acid sequence, 306 residues long: Pantothenate kinase (306 aa).

91–98 (GSVAVGKS) is a binding site for ATP.

It belongs to the prokaryotic pantothenate kinase family.

The protein localises to the cytoplasm. The catalysed reaction is (R)-pantothenate + ATP = (R)-4'-phosphopantothenate + ADP + H(+). Its pathway is cofactor biosynthesis; coenzyme A biosynthesis; CoA from (R)-pantothenate: step 1/5. The sequence is that of Pantothenate kinase from Streptococcus suis (strain 05ZYH33).